A 190-amino-acid polypeptide reads, in one-letter code: Segregation and condensation protein B (190 aa).

This sequence belongs to the ScpB family. In terms of assembly, homodimer. Homodimerization may be required to stabilize the binding of ScpA to the Smc head domains. Component of a cohesin-like complex composed of ScpA, ScpB and the Smc homodimer, in which ScpA and ScpB bind to the head domain of Smc. The presence of the three proteins is required for the association of the complex with DNA.

The protein localises to the cytoplasm. Its function is as follows. Participates in chromosomal partition during cell division. May act via the formation of a condensin-like complex containing Smc and ScpA that pull DNA away from mid-cell into both cell halves. In Bacillus cereus (strain B4264), this protein is Segregation and condensation protein B.